Reading from the N-terminus, the 311-residue chain is Pyrimidine-specific ribonucleoside hydrolase RihA (311 aa).

Histidine 240 is a catalytic residue.

The protein belongs to the IUNH family. RihA subfamily.

Functionally, hydrolyzes with equal efficiency cytidine or uridine to ribose and cytosine or uracil, respectively. In Escherichia fergusonii (strain ATCC 35469 / DSM 13698 / CCUG 18766 / IAM 14443 / JCM 21226 / LMG 7866 / NBRC 102419 / NCTC 12128 / CDC 0568-73), this protein is Pyrimidine-specific ribonucleoside hydrolase RihA.